Reading from the N-terminus, the 151-residue chain is Large-conductance mechanosensitive channel (151 aa).

The next 2 membrane-spanning stretches (helical) occupy residues 14-34 (VVDMAVGIIIGGAFGALVNSL) and 85-105 (GLFVNALIGFLIMAFAVFLLV).

The protein belongs to the MscL family. As to quaternary structure, homopentamer.

It is found in the cell inner membrane. Functionally, channel that opens in response to stretch forces in the membrane lipid bilayer. May participate in the regulation of osmotic pressure changes within the cell. This chain is Large-conductance mechanosensitive channel, found in Chlorobaculum tepidum (strain ATCC 49652 / DSM 12025 / NBRC 103806 / TLS) (Chlorobium tepidum).